A 305-amino-acid chain; its full sequence is Putative beta-lactamase HcpD (305 aa).

A signal peptide spans 1 to 27; it reads MIKSWTKKWFLILFLMASCFGHLVATT. TPR repeat units follow at residues 28 to 61, 96 to 133, 168 to 205, and 240 to 277; these read GEKY…RMGV, HLAC…KGGV, GISC…KDGA, and GSGC…GFSG. Cystine bridges form between cysteine 55–cysteine 63, cysteine 91–cysteine 99, cysteine 127–cysteine 135, cysteine 163–cysteine 171, cysteine 199–cysteine 207, cysteine 235–cysteine 243, and cysteine 271–cysteine 279.

It belongs to the hcp beta-lactamase family.

Its subcellular location is the secreted. The enzyme catalyses a beta-lactam + H2O = a substituted beta-amino acid. Its function is as follows. May hydrolyze 6-aminopenicillinic acid and 7-aminocephalosporanic acid (ACA) derivatives. Binds to penicillin. This Helicobacter pylori (strain J99 / ATCC 700824) (Campylobacter pylori J99) protein is Putative beta-lactamase HcpD (hcpD).